The following is a 694-amino-acid chain: Polyphosphate kinase (694 aa).

Asparagine 45 provides a ligand contact to ATP. 2 residues coordinate Mg(2+): arginine 367 and arginine 397. Histidine 427 functions as the Phosphohistidine intermediate in the catalytic mechanism. 3 residues coordinate ATP: tyrosine 460, arginine 553, and histidine 580.

Belongs to the polyphosphate kinase 1 (PPK1) family. Mg(2+) is required as a cofactor. Post-translationally, an intermediate of this reaction is the autophosphorylated ppk in which a phosphate is covalently linked to a histidine residue through a N-P bond.

It catalyses the reaction [phosphate](n) + ATP = [phosphate](n+1) + ADP. In terms of biological role, catalyzes the reversible transfer of the terminal phosphate of ATP to form a long-chain polyphosphate (polyP). In Campylobacter coli, this protein is Polyphosphate kinase.